A 211-amino-acid polypeptide reads, in one-letter code: Ras-related protein rab-11.1 (211 aa).

18–26 is a GTP binding site; the sequence is GDSGVGKSN. The short motif at 40–48 is the Effector region element; sequence SKSTIGVEF. GTP is bound by residues 66–70, 124–127, and 154–156; these read DTAGQ, NKSD, and SAL. The segment at 187–211 is disordered; it reads GYGGGSGTIIPSPASDPPKKQCCIP. 2 S-geranylgeranyl cysteine lipidation sites follow: Cys208 and Cys209.

This sequence belongs to the small GTPase superfamily. Rab family. As to quaternary structure, interacts with rei-1 and rei-2. The GDP-form preferentially binds to rei-1 and rei-2. As to expression, expressed weakly in sperm, but more predominantly in oocytes. Expressed in the intestine.

The protein resides in the cytoplasmic vesicle. The protein localises to the secretory vesicle. Its subcellular location is the endosome. It is found in the cytoplasm. It localises to the cytoskeleton. The protein resides in the spindle. The protein localises to the microtubule organizing center. Its subcellular location is the spindle pole body. It is found in the centrosome. It localises to the apical cell membrane. The protein resides in the cytosol. The protein localises to the recycling endosome membrane. Its subcellular location is the golgi apparatus membrane. It is found in the cytoplasmic granule. The small GTPases Rab are key regulators of intracellular membrane trafficking, from the formation of transport vesicles to their fusion with membranes. Rabs cycle between an inactive GDP-bound form and an active GTP-bound form that is able to recruit to membranes different set of downstream effectors directly responsible for vesicle formation, movement, tethering and fusion. Involved in regulating the meiotic maturation of oocytes. Plays a role in egg shell formation, regulating exocytosis of chondroitin proteoglycans following fertilization. Controls cortical granule localization and targets them to the plasma membrane for exocytosis. Acts as a major regulator of membrane delivery during cytokinesis. Regulates the cytoskeleton by facilitating astral microtubule elongation and organization during metaphase to ensure proper spindle alignment and polarity in the first embryonic cell division. Maintains normal endoplasmic reticulum morphology during metaphase. Involved in vesicle formation and plasma membrane repair following exposure to pore forming toxins. Regulates endocytic recycling. May play a role in yolk receptor endocytosis in growing oocytes. Plays a role in the shedding of pathogen spores from intestinal cells via its involvement in spore fusion and endocytic trafficking. This chain is Ras-related protein rab-11.1, found in Caenorhabditis elegans.